A 344-amino-acid chain; its full sequence is Putative [LysW]-lysine/[LysW]-ornithine hydrolase (344 aa).

His66 serves as a coordination point for Zn(2+). The active site involves Asp68. Asp90 serves as a coordination point for Zn(2+). Glu117 (proton acceptor) is an active-site residue. 3 residues coordinate Zn(2+): Glu118, Glu139, and His297.

It belongs to the peptidase M20A family. LysK subfamily. Zn(2+) is required as a cofactor. Co(2+) serves as cofactor.

Its subcellular location is the cytoplasm. It catalyses the reaction [amino-group carrier protein]-C-terminal-gamma-(L-lysyl)-L-glutamate + H2O = [amino-group carrier protein]-C-terminal-L-glutamate + L-lysine. The enzyme catalyses [amino-group carrier protein]-C-terminal-gamma-(L-ornithyl)-L-glutamate + H2O = [amino-group carrier protein]-C-terminal-L-glutamate + L-ornithine. It participates in amino-acid biosynthesis; L-lysine biosynthesis via AAA pathway; L-lysine from L-alpha-aminoadipate (Thermus route): step 5/5. Its pathway is amino-acid biosynthesis; L-arginine biosynthesis. Catalyzes the release of L-lysine from [LysW]-gamma-L-lysine and the release of L-ornithine from [LysW]-L-ornithine. This is Putative [LysW]-lysine/[LysW]-ornithine hydrolase from Thermococcus kodakarensis (strain ATCC BAA-918 / JCM 12380 / KOD1) (Pyrococcus kodakaraensis (strain KOD1)).